The primary structure comprises 228 residues: Cytochrome c oxidase subunit 2 (228 aa).

Residues 1-26 (MATWANLGLQDSSSPLMEQLNFFHDH) lie on the Mitochondrial intermembrane side of the membrane. A helical transmembrane segment spans residues 27-47 (TLLILTMITILVGYIMGMLMF). Topologically, residues 48 to 60 (NQFTNRYLLHGQT) are mitochondrial matrix. A helical transmembrane segment spans residues 61–81 (IEIIWTVLPAIILMFIALPSL). Residues 82-228 (RLLYLMDEIN…FIKWITNMTN (147 aa)) are Mitochondrial intermembrane-facing. Positions 161, 196, 198, 200, 204, and 207 each coordinate Cu cation. Glu198 contributes to the Mg(2+) binding site.

It belongs to the cytochrome c oxidase subunit 2 family. As to quaternary structure, component of the cytochrome c oxidase (complex IV, CIV), a multisubunit enzyme composed of a catalytic core of 3 subunits and several supernumerary subunits. The complex exists as a monomer or a dimer and forms supercomplexes (SCs) in the inner mitochondrial membrane with ubiquinol-cytochrome c oxidoreductase (cytochrome b-c1 complex, complex III, CIII). It depends on Cu cation as a cofactor.

It localises to the mitochondrion inner membrane. The catalysed reaction is 4 Fe(II)-[cytochrome c] + O2 + 8 H(+)(in) = 4 Fe(III)-[cytochrome c] + 2 H2O + 4 H(+)(out). Functionally, component of the cytochrome c oxidase, the last enzyme in the mitochondrial electron transport chain which drives oxidative phosphorylation. The respiratory chain contains 3 multisubunit complexes succinate dehydrogenase (complex II, CII), ubiquinol-cytochrome c oxidoreductase (cytochrome b-c1 complex, complex III, CIII) and cytochrome c oxidase (complex IV, CIV), that cooperate to transfer electrons derived from NADH and succinate to molecular oxygen, creating an electrochemical gradient over the inner membrane that drives transmembrane transport and the ATP synthase. Cytochrome c oxidase is the component of the respiratory chain that catalyzes the reduction of oxygen to water. Electrons originating from reduced cytochrome c in the intermembrane space (IMS) are transferred via the dinuclear copper A center (CU(A)) of subunit 2 and heme A of subunit 1 to the active site in subunit 1, a binuclear center (BNC) formed by heme A3 and copper B (CU(B)). The BNC reduces molecular oxygen to 2 water molecules using 4 electrons from cytochrome c in the IMS and 4 protons from the mitochondrial matrix. This chain is Cytochrome c oxidase subunit 2 (COXII), found in Anopheles quadrimaculatus (Common malaria mosquito).